Reading from the N-terminus, the 237-residue chain is tRNA (guanine-N(7)-)-methyltransferase (237 aa).

Residues Met1–Leu24 form a disordered region. 4 residues coordinate S-adenosyl-L-methionine: Glu62, Glu87, Asp119, and Asp141. The active site involves Asp141. Substrate is bound by residues Lys145, Asp177, and Thr216–Glu219.

The protein belongs to the class I-like SAM-binding methyltransferase superfamily. TrmB family.

The enzyme catalyses guanosine(46) in tRNA + S-adenosyl-L-methionine = N(7)-methylguanosine(46) in tRNA + S-adenosyl-L-homocysteine. Its pathway is tRNA modification; N(7)-methylguanine-tRNA biosynthesis. Catalyzes the formation of N(7)-methylguanine at position 46 (m7G46) in tRNA. This Sphingopyxis alaskensis (strain DSM 13593 / LMG 18877 / RB2256) (Sphingomonas alaskensis) protein is tRNA (guanine-N(7)-)-methyltransferase.